The sequence spans 124 residues: U-scoloptoxin-Er5d (124 aa).

The signal sequence occupies residues Met1 to Gly22. Residues Glu23–Arg94 constitute a propeptide that is removed on maturation. 3 RLWRNWE repeats span residues Arg34 to Glu40, Arg61 to Glu67, and Arg86 to Glu92. Position 95 is a pyrrolidone carboxylic acid (Gln95). The stretch at Glu107–Glu113 is one RLWRNWE 4; approximate repeat. A propeptide spanning residues Trp112–Glu124 is cleaved from the precursor.

It belongs to the scoloptoxin-08 family. In terms of tissue distribution, expressed by the venom gland.

The protein resides in the secreted. The polypeptide is U-scoloptoxin-Er5d (Ethmostigmus rubripes (Giant centipede)).